The following is a 453-amino-acid chain: Luminescence regulatory protein LuxO (453 aa).

The Response regulatory domain maps to 1-112 (MVEDTASVAA…RLRVTVNNAI (112 aa)). Asp47 is modified (4-aspartylphosphate). The Sigma-54 factor interaction domain maps to 133–362 (FIGSSQTMQQ…LQNVLRNIVV (230 aa)). ATP is bound by residues 161–168 (GESGTGKE) and 224–233 (ADGGTLFLDE).

Functionally, acts negatively to control the expression of luminescence. At low cell density, LuxO is phosphorylated, and together with sigma-54, causes repression of the luxCDABEGH operon. This repression could be indirect, LuxO could activate a negative regulator of luminescence. At high cell density, LuxO is dephosphorylated and inactive, therefore the luxCDABEGH operon is not repressed and light is emitted. LuxO and sigma-54 have also a role in activating the production of siderophore and in regulating the rugose colony morphology phenotype. This Vibrio campbellii (strain ATCC BAA-1116) protein is Luminescence regulatory protein LuxO (luxO).